We begin with the raw amino-acid sequence, 592 residues long: N-acetyltransferase ESCO2 (592 aa).

Phosphoserine is present on residues Ser-41 and Ser-85. Positions 267 to 294 (KSSVKVQNARSKNEEKLRKNPSGAVVSS) are disordered. Phosphoserine is present on Ser-309. The segment at 384-408 (TVCKSCGMIYTASNPEDEIQHLQHH) adopts a CCHH-type zinc-finger fold.

It belongs to the acetyltransferase family. ECO subfamily.

It is found in the nucleus. It localises to the chromosome. It catalyses the reaction L-lysyl-[protein] + acetyl-CoA = N(6)-acetyl-L-lysyl-[protein] + CoA + H(+). Acetyltransferase required for the establishment of sister chromatid cohesion. Couples the processes of cohesion and DNA replication to ensure that only sister chromatids become paired together. In contrast to the structural cohesins, the deposition and establishment factors are required only during the S phase. Acetylates the cohesin component SMC3. The chain is N-acetyltransferase ESCO2 (Esco2) from Mus musculus (Mouse).